Here is a 228-residue protein sequence, read N- to C-terminus: tRNA (carboxymethyluridine(34)-5-O)-methyltransferase (228 aa).

Its subcellular location is the cytoplasm. It is found in the nucleus. The enzyme catalyses 5-(carboxymethyl)uridine(34) in tRNA + S-adenosyl-L-methionine = 5-(2-methoxy-2-oxoethyl)uridine(34) in tRNA + S-adenosyl-L-homocysteine. Functionally, required for the methylation of the wobble bases at position 34 in tRNA. Appears to have a role in stress-response. The protein is tRNA (carboxymethyluridine(34)-5-O)-methyltransferase (trm9) of Schizosaccharomyces pombe (strain 972 / ATCC 24843) (Fission yeast).